Reading from the N-terminus, the 167-residue chain is L-alanine exporter AlaE (167 aa).

The next 4 helical transmembrane spans lie at 25-45 (GTEF…TGII), 50-70 (IAGM…ALMI), 105-125 (FQVP…GGLV), and 129-149 (LGAA…LNWV).

Belongs to the AlaE exporter family.

It localises to the cell inner membrane. In terms of biological role, exports L-alanine. The protein is L-alanine exporter AlaE of Pantoea sp. (strain At-9b).